The sequence spans 206 residues: Small ribosomal subunit protein uS4 (206 aa).

The 63-residue stretch at 96–158 (SRLDNVVYRM…AKGQLRIKGA (63 aa)) folds into the S4 RNA-binding domain.

Belongs to the universal ribosomal protein uS4 family. In terms of assembly, part of the 30S ribosomal subunit. Contacts protein S5. The interaction surface between S4 and S5 is involved in control of translational fidelity.

One of the primary rRNA binding proteins, it binds directly to 16S rRNA where it nucleates assembly of the body of the 30S subunit. In terms of biological role, with S5 and S12 plays an important role in translational accuracy. This chain is Small ribosomal subunit protein uS4, found in Coxiella burnetii (strain CbuG_Q212) (Coxiella burnetii (strain Q212)).